Consider the following 130-residue polypeptide: Protein ApaG (130 aa).

The ApaG domain occupies 3-127; sequence RAVTRNIEVQ…FSLDLPGTRR (125 aa).

The protein is Protein ApaG of Mesorhizobium japonicum (strain LMG 29417 / CECT 9101 / MAFF 303099) (Mesorhizobium loti (strain MAFF 303099)).